The primary structure comprises 1106 residues: Carbamoyl phosphate synthase large chain (1106 aa).

The interval 1 to 402 (MPKREDLKSV…ALQKALRSLE (402 aa)) is carboxyphosphate synthetic domain. ATP is bound by residues Arg129, Arg169, Gly175, Gly176, Glu208, Ile210, Glu215, Gly241, Val242, His243, Gln285, and Glu299. An ATP-grasp 1 domain is found at 133-328 (KGVVERCGAE…IAKIATKLSL (196 aa)). Residues Gln285, Glu299, and Asn301 each coordinate Mg(2+). Positions 285, 299, and 301 each coordinate Mn(2+). Residues 403–546 (QKGSQLDFGS…YHYSSYDQED (144 aa)) are oligomerization domain. The tract at residues 547–956 (EIALHEKPSV…AFAKSQAAAN (410 aa)) is carbamoyl phosphate synthetic domain. Positions 677–868 (ARVLDIAGLI…LAKAAALIGT (192 aa)) constitute an ATP-grasp 2 domain. 10 residues coordinate ATP: Arg713, Arg752, Leu754, Glu759, Gly784, Ile785, His786, Ser787, Gln827, and Glu839. Gln827, Glu839, and Asn841 together coordinate Mg(2+). Positions 827, 839, and 841 each coordinate Mn(2+). Residues 957–1106 (NALPTEGKVF…EALLEAAANV (150 aa)) enclose the MGS-like domain. An allosteric domain region spans residues 957-1106 (NALPTEGKVF…EALLEAAANV (150 aa)).

It belongs to the CarB family. Composed of two chains; the small (or glutamine) chain promotes the hydrolysis of glutamine to ammonia, which is used by the large (or ammonia) chain to synthesize carbamoyl phosphate. Tetramer of heterodimers (alpha,beta)4. The cofactor is Mg(2+). Mn(2+) is required as a cofactor.

The enzyme catalyses hydrogencarbonate + L-glutamine + 2 ATP + H2O = carbamoyl phosphate + L-glutamate + 2 ADP + phosphate + 2 H(+). It carries out the reaction hydrogencarbonate + NH4(+) + 2 ATP = carbamoyl phosphate + 2 ADP + phosphate + 2 H(+). The protein operates within amino-acid biosynthesis; L-arginine biosynthesis; carbamoyl phosphate from bicarbonate: step 1/1. It functions in the pathway pyrimidine metabolism; UMP biosynthesis via de novo pathway; (S)-dihydroorotate from bicarbonate: step 1/3. Functionally, large subunit of the glutamine-dependent carbamoyl phosphate synthetase (CPSase). CPSase catalyzes the formation of carbamoyl phosphate from the ammonia moiety of glutamine, carbonate, and phosphate donated by ATP, constituting the first step of 2 biosynthetic pathways, one leading to arginine and/or urea and the other to pyrimidine nucleotides. The large subunit (synthetase) binds the substrates ammonia (free or transferred from glutamine from the small subunit), hydrogencarbonate and ATP and carries out an ATP-coupled ligase reaction, activating hydrogencarbonate by forming carboxy phosphate which reacts with ammonia to form carbamoyl phosphate. This Renibacterium salmoninarum (strain ATCC 33209 / DSM 20767 / JCM 11484 / NBRC 15589 / NCIMB 2235) protein is Carbamoyl phosphate synthase large chain.